The sequence spans 364 residues: Probable transcription factor At4g00390 (364 aa).

A disordered region spans residues 1–149; the sequence is MTKKLDPPTA…STKRVKKDEE (149 aa). Over residues 13–32 the composition is skewed to acidic residues; sequence SDEDDVETSEDDSSSSEEDE. Residues 39–80 are compositionally biased toward low complexity; the sequence is ATTAAAPAKSTAVSAATPAKSTSVSAAAPSKSTAVSAAADSD. The span at 81 to 93 shows a compositional bias: acidic residues; it reads SGSESETDSDSES.

The protein belongs to the GeBP family.

This is Probable transcription factor At4g00390 from Arabidopsis thaliana (Mouse-ear cress).